We begin with the raw amino-acid sequence, 81 residues long: Small ribosomal subunit protein bS16 (81 aa).

This sequence belongs to the bacterial ribosomal protein bS16 family.

The protein is Small ribosomal subunit protein bS16 of Acetivibrio thermocellus (strain ATCC 27405 / DSM 1237 / JCM 9322 / NBRC 103400 / NCIMB 10682 / NRRL B-4536 / VPI 7372) (Clostridium thermocellum).